We begin with the raw amino-acid sequence, 301 residues long: CPX chromosomal region candidate gene 1 protein (301 aa).

The segment at 1-77 is disordered; it reads MSYPTKEGSD…ENSELETEIQ (77 aa). Residues 44–60 are compositionally biased toward polar residues; that stretch reads VETNPINREPGTATSQE.

Expressed in a variety of fetal tissues.

In Homo sapiens (Human), this protein is CPX chromosomal region candidate gene 1 protein (CPXCR1).